The chain runs to 364 residues: NADH-quinone oxidoreductase subunit H (364 aa).

The next 8 helical transmembrane spans lie at 21–41 (AGQI…LLLA), 88–108 (VFLL…AVIP), 120–140 (VGIL…IMGG), 159–179 (MVSY…LAGS), 208–228 (LPLL…GLAE), 267–287 (IVLI…APFP), 301–321 (FYYF…VSMA), and 340–360 (VFLP…VFGP).

The protein belongs to the complex I subunit 1 family. NDH-1 is composed of 14 different subunits. Subunits NuoA, H, J, K, L, M, N constitute the membrane sector of the complex.

Its subcellular location is the cell inner membrane. The catalysed reaction is a quinone + NADH + 5 H(+)(in) = a quinol + NAD(+) + 4 H(+)(out). Functionally, NDH-1 shuttles electrons from NADH, via FMN and iron-sulfur (Fe-S) centers, to quinones in the respiratory chain. The immediate electron acceptor for the enzyme in this species is believed to be ubiquinone. Couples the redox reaction to proton translocation (for every two electrons transferred, four hydrogen ions are translocated across the cytoplasmic membrane), and thus conserves the redox energy in a proton gradient. This subunit may bind ubiquinone. In Phenylobacterium zucineum (strain HLK1), this protein is NADH-quinone oxidoreductase subunit H.